The sequence spans 412 residues: Proteasome-activating nucleotidase (412 aa).

Residues 15–72 (EDLYRYLLERVTNLEDRNTELREQLRQIEADKRYLETQKVRYEREVRKFKGEIEQMKS) are a coiled coil. ATP is bound by residues 197–202 (GTGKTL) and H336. A docks into pockets in the proteasome alpha-ring to cause gate opening region spans residues 410-412 (MFA).

The protein belongs to the AAA ATPase family. As to quaternary structure, homohexamer. The hexameric complex has a two-ring architecture resembling a top hat that caps the 20S proteasome core at one or both ends. Upon ATP-binding, the C-terminus of PAN interacts with the alpha-rings of the proteasome core by binding to the intersubunit pockets.

It is found in the cytoplasm. In terms of biological role, ATPase which is responsible for recognizing, binding, unfolding and translocation of substrate proteins into the archaeal 20S proteasome core particle. Is essential for opening the gate of the 20S proteasome via an interaction with its C-terminus, thereby allowing substrate entry and access to the site of proteolysis. Thus, the C-termini of the proteasomal ATPase function like a 'key in a lock' to induce gate opening and therefore regulate proteolysis. Unfolding activity requires energy from ATP hydrolysis, whereas ATP binding alone promotes ATPase-20S proteasome association which triggers gate opening, and supports translocation of unfolded substrates. The polypeptide is Proteasome-activating nucleotidase (Methanosphaerula palustris (strain ATCC BAA-1556 / DSM 19958 / E1-9c)).